A 354-amino-acid chain; its full sequence is Peptide chain release factor 1 (354 aa).

N5-methylglutamine is present on Gln-232.

The protein belongs to the prokaryotic/mitochondrial release factor family. In terms of processing, methylated by PrmC. Methylation increases the termination efficiency of RF1.

It localises to the cytoplasm. In terms of biological role, peptide chain release factor 1 directs the termination of translation in response to the peptide chain termination codons UAG and UAA. The chain is Peptide chain release factor 1 from Phytoplasma australiense.